Here is a 343-residue protein sequence, read N- to C-terminus: Flagellar motor switch protein FliG (343 aa).

Residues 137-140 (EHPQ) carry the Part of the EHPQR-motif motif. Residues 245 to 248 (MFTF) carry the M-F-X-F motif; its intrinsic flexibility is probably coupled to flagellar rotation motif.

It belongs to the FliG family.

Its subcellular location is the cell inner membrane. It is found in the bacterial flagellum basal body. Functionally, one of the proteins that forms a switch complex that is proposed to be located at the base of the basal body. This complex interacts with chemotaxis proteins (such as CheY) in addition to contacting components of the motor that determine the direction of flagellar rotation. Required for flagellum synthesis and motility. In H.pylori four flagellar switch proteins are encoded, FliG, FliM, FliN and FliY. The polypeptide is Flagellar motor switch protein FliG (Helicobacter pylori (strain ATCC 700392 / 26695) (Campylobacter pylori)).